A 489-amino-acid chain; its full sequence is Mitochondrial distribution and morphology protein 10 (489 aa).

Belongs to the MDM10 family. Component of the ER-mitochondria encounter structure (ERMES) or MDM complex, composed of MMM1, MDM10, MDM12 and MDM34. Associates with the mitochondrial outer membrane sorting assembly machinery SAM(core) complex.

Its subcellular location is the mitochondrion outer membrane. In terms of biological role, component of the ERMES/MDM complex, which serves as a molecular tether to connect the endoplasmic reticulum and mitochondria. Components of this complex are involved in the control of mitochondrial shape and protein biogenesis and may function in phospholipid exchange. MDM10 is involved in the late assembly steps of the general translocase of the mitochondrial outer membrane (TOM complex). Functions in the TOM40-specific route of the assembly of outer membrane beta-barrel proteins, including the association of TOM40 with the receptor TOM22 and small TOM proteins. Can associate with the SAM(core) complex as well as the MDM12-MMM1 complex, both involved in late steps of the major beta-barrel assembly pathway, that is responsible for biogenesis of all outer membrane beta-barrel proteins. May act as a switch that shuttles between both complexes and channels precursor proteins into the TOM40-specific pathway. Plays a role in mitochondrial morphology and in the inheritance of mitochondria. The protein is Mitochondrial distribution and morphology protein 10 of Arthroderma otae (strain ATCC MYA-4605 / CBS 113480) (Microsporum canis).